A 227-amino-acid polypeptide reads, in one-letter code: ATP synthase subunit a (227 aa).

Transmembrane regions (helical) follow at residues 16–36 (AFVYAFHFCLVALIILIVAYI), 79–99 (LVATIGFIVFFSNVIGIIPGF), 105–125 (SLNLTLVLALVVFIYYNFEGI), 176–196 (LFLLAMLTLAPWFAPLPAFAL), and 202–222 (VLQTFIFMMLTYVYLAGAVAI).

Belongs to the ATPase A chain family. In terms of assembly, F-type ATPases have 2 components, CF(1) - the catalytic core - and CF(0) - the membrane proton channel. CF(1) has five subunits: alpha(3), beta(3), gamma(1), delta(1), epsilon(1). CF(0) has three main subunits: a(1), b(2) and c(9-12). The alpha and beta chains form an alternating ring which encloses part of the gamma chain. CF(1) is attached to CF(0) by a central stalk formed by the gamma and epsilon chains, while a peripheral stalk is formed by the delta and b chains.

The protein resides in the cell inner membrane. Its function is as follows. Key component of the proton channel; it plays a direct role in the translocation of protons across the membrane. In Campylobacter concisus (strain 13826), this protein is ATP synthase subunit a.